The following is a 512-amino-acid chain: L-aspartate oxidase (512 aa).

Residues 17-20 (SGLA) and 46-53 (SSAWAQGG) each bind FAD. Arg278 serves as the catalytic Proton donor/acceptor. FAD contacts are provided by residues Glu361 and 377–378 (SL).

It belongs to the FAD-dependent oxidoreductase 2 family. NadB subfamily. The cofactor is FAD.

The protein localises to the cytoplasm. The enzyme catalyses L-aspartate + O2 = iminosuccinate + H2O2. It functions in the pathway cofactor biosynthesis; NAD(+) biosynthesis; iminoaspartate from L-aspartate (oxidase route): step 1/1. Its function is as follows. Catalyzes the oxidation of L-aspartate to iminoaspartate, the first step in the de novo biosynthesis of NAD(+). The protein is L-aspartate oxidase (nadB) of Xylella fastidiosa (strain Temecula1 / ATCC 700964).